A 942-amino-acid chain; its full sequence is Leucine--tRNA ligase 1 (942 aa).

Residues P39 to H49 carry the 'HIGH' region motif. The 'KMSKS' region signature appears at K624 to S628. Position 627 (K627) interacts with ATP.

This sequence belongs to the class-I aminoacyl-tRNA synthetase family.

It localises to the cytoplasm. It carries out the reaction tRNA(Leu) + L-leucine + ATP = L-leucyl-tRNA(Leu) + AMP + diphosphate. The polypeptide is Leucine--tRNA ligase 1 (Sulfolobus acidocaldarius (strain ATCC 33909 / DSM 639 / JCM 8929 / NBRC 15157 / NCIMB 11770)).